Here is a 461-residue protein sequence, read N- to C-terminus: tRNA modification GTPase MnmE (461 aa).

Positions 32, 89, and 128 each coordinate (6S)-5-formyl-5,6,7,8-tetrahydrofolate. One can recognise a TrmE-type G domain in the interval 224 to 387 (GHALSIVGKP…LSQKISEFFP (164 aa)). N234 provides a ligand contact to K(+). GTP is bound by residues 234 to 239 (NAGKSS), 253 to 259 (SDIKGTT), and 278 to 281 (DTAG). S238 provides a ligand contact to Mg(2+). K(+) contacts are provided by S253, I255, and T258. Position 259 (T259) interacts with Mg(2+). K461 lines the (6S)-5-formyl-5,6,7,8-tetrahydrofolate pocket.

This sequence belongs to the TRAFAC class TrmE-Era-EngA-EngB-Septin-like GTPase superfamily. TrmE GTPase family. Homodimer. Heterotetramer of two MnmE and two MnmG subunits. Requires K(+) as cofactor.

It localises to the cytoplasm. In terms of biological role, exhibits a very high intrinsic GTPase hydrolysis rate. Involved in the addition of a carboxymethylaminomethyl (cmnm) group at the wobble position (U34) of certain tRNAs, forming tRNA-cmnm(5)s(2)U34. The sequence is that of tRNA modification GTPase MnmE from Helicobacter pylori (strain J99 / ATCC 700824) (Campylobacter pylori J99).